We begin with the raw amino-acid sequence, 329 residues long: Serpentine receptor class alpha-8 (329 aa).

A run of 6 helical transmembrane segments spans residues 26-46 (VDLI…KMVL), 60-80 (FLNI…VVVI), 141-161 (IFVG…TGKL), 187-207 (TIHF…SVAL), 231-251 (VIES…FMFI), and 273-293 (FWVV…LLLI).

It belongs to the nematode receptor-like protein sra family.

The protein localises to the membrane. This is Serpentine receptor class alpha-8 (sra-8) from Caenorhabditis elegans.